A 548-amino-acid polypeptide reads, in one-letter code: Chaperonin GroEL (548 aa).

ATP contacts are provided by residues 30 to 33 (TLGP), Lys-51, 87 to 91 (DGTTT), Gly-415, 479 to 481 (NAA), and Asp-495.

Belongs to the chaperonin (HSP60) family. As to quaternary structure, forms a cylinder of 14 subunits composed of two heptameric rings stacked back-to-back. Interacts with the co-chaperonin GroES.

It is found in the cytoplasm. It catalyses the reaction ATP + H2O + a folded polypeptide = ADP + phosphate + an unfolded polypeptide.. Together with its co-chaperonin GroES, plays an essential role in assisting protein folding. The GroEL-GroES system forms a nano-cage that allows encapsulation of the non-native substrate proteins and provides a physical environment optimized to promote and accelerate protein folding. The protein is Chaperonin GroEL of Klebsiella pneumoniae (strain 342).